A 235-amino-acid chain; its full sequence is Aspartate/glutamate leucyltransferase (235 aa).

The protein belongs to the R-transferase family. Bpt subfamily.

The protein localises to the cytoplasm. It catalyses the reaction N-terminal L-glutamyl-[protein] + L-leucyl-tRNA(Leu) = N-terminal L-leucyl-L-glutamyl-[protein] + tRNA(Leu) + H(+). The catalysed reaction is N-terminal L-aspartyl-[protein] + L-leucyl-tRNA(Leu) = N-terminal L-leucyl-L-aspartyl-[protein] + tRNA(Leu) + H(+). Functions in the N-end rule pathway of protein degradation where it conjugates Leu from its aminoacyl-tRNA to the N-termini of proteins containing an N-terminal aspartate or glutamate. The polypeptide is Aspartate/glutamate leucyltransferase (Pseudomonas fluorescens (strain SBW25)).